The sequence spans 447 residues: Acid phosphatase (447 aa).

The signal sequence occupies residues Met1–Ala17. N-linked (GlcNAc...) asparagine glycosylation is found at Asn119, Asn150, Asn177, Asn186, and Asn208. The active-site Proton donor is Asp215. N-linked (GlcNAc...) asparagine glycosylation is found at Asn217, Asn234, Asn240, Asn315, Asn332, Asn382, and Asn405. A lipid anchor (GPI-like-anchor amidated serine) is attached at Ser419. Residues Ala420–Leu447 constitute a propeptide, removed in mature form.

Post-translationally, the GPI-like anchor contains a phosphoceramide lipid group. The anchor position has not been determined.

The protein localises to the cell membrane. The catalysed reaction is a phosphate monoester + H2O = an alcohol + phosphate. Inhibited by NaF, molybdate and vanadate. In terms of biological role, has both phosphomonoesterase and phosphodiesterase activity. Cleaves a broad range of phosphate esters. This chain is Acid phosphatase (phoA), found in Aspergillus fumigatus (strain ATCC MYA-4609 / CBS 101355 / FGSC A1100 / Af293) (Neosartorya fumigata).